The sequence spans 634 residues: Chaperone protein HtpG (634 aa).

Residues 1–345 are a; substrate-binding; that stretch reads MEHQQNHTFS…SNDLPLNVSR (345 aa). Residues 346–562 form a b region; sequence EILQDTRVTA…NDDMSTQMAK (217 aa). A c region spans residues 563–634; the sequence is LMAQMGQPVP…VGRINKLLLA (72 aa).

The protein belongs to the heat shock protein 90 family. In terms of assembly, homodimer.

The protein localises to the cytoplasm. In terms of biological role, molecular chaperone. Has ATPase activity. This Psychromonas ingrahamii (strain DSM 17664 / CCUG 51855 / 37) protein is Chaperone protein HtpG.